The sequence spans 954 residues: Centrosomal protein of 112 kDa (954 aa).

The stretch at 276–954 forms a coiled coil; the sequence is QKHDAEVQKI…EELTTYQSRR (679 aa).

It localises to the cytoplasm. Its subcellular location is the cytoskeleton. It is found in the microtubule organizing center. The protein localises to the centrosome. This Mus musculus (Mouse) protein is Centrosomal protein of 112 kDa (Cep112).